The following is a 324-amino-acid chain: Fibronectin type III domain-containing protein 8 (324 aa).

Positions 179-280 constitute a Fibronectin type-III domain; sequence PDTPFIFEHT…KPYKFATLAT (102 aa).

The polypeptide is Fibronectin type III domain-containing protein 8 (FNDC8) (Homo sapiens (Human)).